Consider the following 212-residue polypeptide: Redox-sensing transcriptional repressor Rex (212 aa).

The segment at residues K17 to F56 is a DNA-binding region (H-T-H motif). G91–G96 provides a ligand contact to NAD(+).

The protein belongs to the transcriptional regulatory Rex family. Homodimer.

The protein resides in the cytoplasm. Functionally, modulates transcription in response to changes in cellular NADH/NAD(+) redox state. In Clostridium perfringens (strain ATCC 13124 / DSM 756 / JCM 1290 / NCIMB 6125 / NCTC 8237 / Type A), this protein is Redox-sensing transcriptional repressor Rex.